The chain runs to 302 residues: Tegument protein VP22 (302 aa).

The segment covering 1-10 (MASSDGDRLC) has biased composition (basic and acidic residues). Disordered stretches follow at residues 1 to 42 (MASS…PDDS) and 125 to 170 (SFTK…SSWC). Residues 154–244 (RPISFSTAPK…ANEADLGEGA (91 aa)) form an interaction with gE region. A compositionally biased stretch (polar residues) spans 157-170 (SFSTAPKTATSSWC). Residues 212–224 (LDRLLTGAVIRIT) carry the Nuclear export signal motif. Positions 243–302 (GASVSKRGHNRKTGDLQGGMGNEPMYAQVRKPKSRTDTQTTGRITNRSRARSASRTDTRK) are disordered.

This sequence belongs to the alphaherpesvirinae VP22 tegument protein family. In terms of assembly, interacts with gE (via C-terminus); this interaction is necessary for the recruitment of VP22/ORF9 to the Golgi and its packaging into virions. Interacts with gM (via C-terminus). Interacts with VP16/ORF10; this interaction allows the formation of a tripartite complex composed of VP16/ORF10, VP22/ORF9 and VHS/ORF17. Interacts with the capsid-binding protein ORF44. Interacts with host CGAS. In terms of processing, highly phosphorylated in the host cell. Packaging is selective for underphosphorylated forms.

The protein localises to the virion tegument. The protein resides in the host cytoplasm. Its subcellular location is the host nucleus. It is found in the host Golgi apparatus. Tegument protein that plays different roles during the time course of infection. Participates in both the accumulation of viral mRNAs and viral protein translation at late time of infection. Modulates the RNase activity of the virion host shutoff protein ORF17 probably to ensure necessary levels of key cellular mRNAs and proteins. Plays a role in microtubule reorganization that occurs after viral infection by stabilizing microtubule network. Plays a role in the inhibition of host innate immune system by targeting the CGAS enzymatic activity which is the principal cytosolic DNA sensor that detects invading viral DNA. Acts by mediating disruption of liquid-like droplets in which CGAS is activated, thereby preventing CGAS activity. This Homo sapiens (Human) protein is Tegument protein VP22.